We begin with the raw amino-acid sequence, 447 residues long: Probable glycine dehydrogenase (decarboxylating) subunit 1 (447 aa).

Belongs to the GcvP family. N-terminal subunit subfamily. As to quaternary structure, the glycine cleavage system is composed of four proteins: P, T, L and H. In this organism, the P 'protein' is a heterodimer of two subunits.

It catalyses the reaction N(6)-[(R)-lipoyl]-L-lysyl-[glycine-cleavage complex H protein] + glycine + H(+) = N(6)-[(R)-S(8)-aminomethyldihydrolipoyl]-L-lysyl-[glycine-cleavage complex H protein] + CO2. Functionally, the glycine cleavage system catalyzes the degradation of glycine. The P protein binds the alpha-amino group of glycine through its pyridoxal phosphate cofactor; CO(2) is released and the remaining methylamine moiety is then transferred to the lipoamide cofactor of the H protein. This Bacillus cytotoxicus (strain DSM 22905 / CIP 110041 / 391-98 / NVH 391-98) protein is Probable glycine dehydrogenase (decarboxylating) subunit 1.